The primary structure comprises 530 residues: AAA-ATPase At3g28510 (530 aa).

Residues 5–25 (GAIWGITGTTVTSFMFFWAIY) form a helical membrane-spanning segment. 250-257 (GPPGTGKS) contacts ATP. 2 disordered regions span residues 312–339 (QRKKKKEEDEEEDGEEKKEGEKKPKVDD) and 463–530 (KARK…KSDS). Basic and acidic residues-rich tracts occupy residues 326 to 339 (EEKKEGEKKPKVDD) and 463 to 511 (KARK…KEEN). Residues 512–523 (GNVSQQNGNSID) show a composition bias toward polar residues.

Belongs to the AAA ATPase family. BCS1 subfamily. Requires Mg(2+) as cofactor.

It is found in the membrane. It carries out the reaction ATP + H2O = ADP + phosphate + H(+). This is AAA-ATPase At3g28510 from Arabidopsis thaliana (Mouse-ear cress).